A 448-amino-acid polypeptide reads, in one-letter code: StAR-related lipid transfer protein 3 (448 aa).

Residues 47-219 form the MENTAL domain; it reads FSDVRRTFCL…YSPPESLAGS (173 aa). 4 consecutive transmembrane segments (helical) span residues 53-73, 96-116, 122-142, and 150-170; these read TFCLFVTFDLLFITLLWIIEL, FFDIFLLAVFRFLCLQLGYAA, WWVIAITTLVTTAFLIAKVIL, and AFGYVLPITSFVVAWLETWFL. Residues 208 to 214 carry the FFAT motif; that stretch reads QFYSPPE. An START domain is found at 232–445; that stretch reads AVTEQEKAFV…LRQRINEVHV (214 aa).

The protein belongs to the STARD3 family. Homodimer. Phosphorylated. Phosphorylation allows the tethering of two membranes that participates in the formation of ER-endosome contacts. Phosphorylation of FFAT motif drives membrane tethering between the endoplasmic reticulum and late endosomes that in turn allows the efficient transport of sterol mediated by the START domain.

It localises to the late endosome membrane. The catalysed reaction is cholesterol(in) = cholesterol(out). Sterol-binding protein that mediates cholesterol transport from the endoplasmic reticulum to endosomes. The sterol transport mechanism is triggered by phosphorylation of FFAT motif that leads to membrane tethering between the endoplasmic reticulum and late endosomes. Acts as a lipid transfer protein that redirects sterol to the endosome at the expense of the cell membrane and favors membrane formation inside endosomes. The chain is StAR-related lipid transfer protein 3 from Danio rerio (Zebrafish).